A 283-amino-acid polypeptide reads, in one-letter code: Elongation factor Ts (283 aa).

The involved in Mg(2+) ion dislocation from EF-Tu stretch occupies residues 80-83 (TDFV).

It belongs to the EF-Ts family.

The protein localises to the cytoplasm. Associates with the EF-Tu.GDP complex and induces the exchange of GDP to GTP. It remains bound to the aminoacyl-tRNA.EF-Tu.GTP complex up to the GTP hydrolysis stage on the ribosome. The chain is Elongation factor Ts from Haemophilus influenzae (strain 86-028NP).